The sequence spans 416 residues: UPF0761 membrane protein Rfer_2991 (416 aa).

Helical transmembrane passes span 60-80, 117-137, 156-176, 187-207, 222-242, and 268-288; these read MALV…PMFA, LGGA…LTID, VLVY…SLSI, VVGV…FFMV, WVKW…LELA, and ILLI…VIAA.

The protein belongs to the UPF0761 family.

The protein resides in the cell inner membrane. The sequence is that of UPF0761 membrane protein Rfer_2991 from Albidiferax ferrireducens (strain ATCC BAA-621 / DSM 15236 / T118) (Rhodoferax ferrireducens).